Here is a 333-residue protein sequence, read N- to C-terminus: Endo-1,4-beta-xylanase (333 aa).

Positions Met-1 to Cys-17 are cleaved as a signal peptide. One can recognise a GH10 domain in the interval Gln-18–Gly-330. The active-site Proton donor is Glu-147. Catalysis depends on Glu-252, which acts as the Nucleophile.

The protein belongs to the glycosyl hydrolase 10 (cellulase F) family.

The protein localises to the secreted. The enzyme catalyses Endohydrolysis of (1-&gt;4)-beta-D-xylosidic linkages in xylans.. It participates in glycan degradation; xylan degradation. Has xylanase activity. Seems to be involved in the release of sugars from the hemicellulolytic fraction in the compost. This is Endo-1,4-beta-xylanase (xlnA) from Agaricus bisporus (White button mushroom).